We begin with the raw amino-acid sequence, 470 residues long: UDP-glycosyltransferase 91A1 (470 aa).

UDP-alpha-D-glucose is bound by residues serine 290, 350–352 (VEQ), 367–375 (HPGWGTIIE), and 389–392 (VYDQ).

This sequence belongs to the UDP-glycosyltransferase family.

This Arabidopsis thaliana (Mouse-ear cress) protein is UDP-glycosyltransferase 91A1 (UGT91A1).